Here is a 77-residue protein sequence, read N- to C-terminus: uncharacterized protein (77 aa).

It to E.coli YdfK.

This is an uncharacterized protein from Escherichia coli (strain K12).